A 163-amino-acid polypeptide reads, in one-letter code: Protein EARLY RESPONSIVE TO DEHYDRATION 15 (163 aa).

Residues 10-20 (TLNPDAPLFIP) carry the PAM2-like motif. The disordered stretch occupies residues 118-163 (NGEMVKKSSGNRSPRSIVEPAKYAEKPAKWGNQRVAAAPRNIHQPR).

Interacts with PAB2, PAB4 and PAB8. Interacts with MPC. In terms of tissue distribution, expressed in cauline leaves, stems, rosette leaves, immature siliques and primary inflorescences.

It localises to the cytoplasm. In terms of biological role, central component of stress responses that interacts with poly(A)-binding proteins. Negative regulator of abscisic acid (ABA) responses, including resistance to drought and freezing as well as stomatal closure regulation. Mediates resistance to the bacterial necrotroph pathogen Erwinia carotovora subsp. carotovora and promotes the induction of marker genes for systemic acquired resistance (SAR). The polypeptide is Protein EARLY RESPONSIVE TO DEHYDRATION 15 (ERD15) (Arabidopsis thaliana (Mouse-ear cress)).